Reading from the N-terminus, the 491-residue chain is Limb region 1 homolog-like protein (491 aa).

Residues Met-1–Thr-20 lie on the Extracellular side of the membrane. The chain crosses the membrane as a helical span at residues Ile-21–Phe-41. At Lys-42 to Lys-59 the chain is on the cytoplasmic side. Residues Ile-60–Pro-80 form a helical membrane-spanning segment. The Extracellular portion of the chain corresponds to Ile-81–Asn-111. Residues Leu-112–Thr-132 traverse the membrane as a helical segment. Topologically, residues Glu-133–Ala-152 are cytoplasmic. Residues Val-153–Leu-173 form a helical membrane-spanning segment. Residues His-174 to Tyr-192 lie on the Extracellular side of the membrane. Residues Leu-193–Leu-213 traverse the membrane as a helical segment. Residues Ser-214–Asn-292 lie on the Cytoplasmic side of the membrane. A helical transmembrane segment spans residues Leu-293–Val-313. At Cys-314–Ser-346 the chain is on the extracellular side. Residues Leu-347 to Phe-367 form a helical membrane-spanning segment. The Cytoplasmic segment spans residues Tyr-368–Thr-384. Residues Leu-385 to Phe-405 form a helical membrane-spanning segment. The Extracellular portion of the chain corresponds to Ser-406–Gly-427. A helical transmembrane segment spans residues Ser-428 to Ile-448. Residues Asn-449 to His-491 are Cytoplasmic-facing.

It belongs to the LIMR family. As to quaternary structure, dimer. Can also form higher oligomers.

Its subcellular location is the cell membrane. It is found in the endoplasmic reticulum membrane. Its function is as follows. May play a role in lymphocyte development by negatively regulating the canonical Wnt signaling pathway. May act as a LCN1 receptor. This is Limb region 1 homolog-like protein (lmbr1l) from Danio rerio (Zebrafish).